A 370-amino-acid polypeptide reads, in one-letter code: 5-hydroxytryptamine receptor 5B (370 aa).

A disordered region spans residues 1 to 36 (MEVSNLSGATPGIAFPPGPESCSDSPSSGRSMGSTP). Over 1–48 (MEVSNLSGATPGIAFPPGPESCSDSPSSGRSMGSTPGGLILSGREPPF) the chain is Extracellular. Residue asparagine 5 is glycosylated (N-linked (GlcNAc...) asparagine). The span at 20 to 36 (ESCSDSPSSGRSMGSTP) shows a compositional bias: low complexity. The helical transmembrane segment at 49 to 75 (SAFTVLVVTLLVLLIAATFLWNLLVLV) threads the bilayer. Residues 76–88 (TILRVRAFHRVPH) are Cytoplasmic-facing. The helical transmembrane segment at 89–115 (NLVASTAVSDVLVAALVMPLSLVSELS) threads the bilayer. Topologically, residues 116–127 (AGRRWQLGRSLC) are extracellular. Cysteine 127 and cysteine 205 form a disulfide bridge. A helical transmembrane segment spans residues 128–150 (HVWISFDVLCCTASIWNVAAIAL). Aspartate 134 is a serotonin binding site. Residues 151-168 (DRYWTITRHLQYTLRTRR) lie on the Cytoplasmic side of the membrane. The helical transmembrane segment at 169 to 189 (RASALMIAITWALSALIALAP) threads the bilayer. Topologically, residues 190–211 (LLFGWGEAYDARLQRCQVSQEP) are extracellular. Residues 212–233 (SYAVFSTCGAFYVPLAVVLFVY) traverse the membrane as a helical segment. Over 234–300 (WKIYKAAKFR…QKEKRAAMMV (67 aa)) the chain is Cytoplasmic. The helical transmembrane segment at 301–325 (GILIGVFVLCWIPFFLTELVSPLCA) threads the bilayer. Residues 326–327 (CS) lie on the Extracellular side of the membrane. A helical transmembrane segment spans residues 328 to 352 (LPPIWKSIFLWLGYSNSFFNPLIYT). Topologically, residues 353–370 (AFNKNYNNAFKSLFTKQR) are cytoplasmic.

Belongs to the G-protein coupled receptor 1 family. As to expression, brain; in the CA1 region of hippocampus, the medial habenula, and raphe nuclei.

The protein resides in the cell membrane. Functionally, G-protein coupled receptor for 5-hydroxytryptamine (serotonin), a biogenic hormone that functions as a neurotransmitter, a hormone and a mitogen. Also functions as a receptor for ergot alkaloid derivatives and other psychoactive substances. Ligand binding causes a conformation change that triggers signaling via guanine nucleotide-binding proteins (G proteins) and modulates the activity of downstream effectors. Htr5b is coupled to G(i)/G(o) G alpha proteins and mediates inhibitory neurotransmission: signaling inhibits adenylate cyclase activity and activates a phosphatidylinositol-calcium second messenger system that regulates the release of Ca(2+) ions from intracellular stores. The protein is 5-hydroxytryptamine receptor 5B of Rattus norvegicus (Rat).